The chain runs to 231 residues: Potassium/proton antiporter CemA (231 aa).

The next 4 membrane-spanning stretches (helical) occupy residues 7–27 (FISLLYLASIVFLPWWISLSF), 116–136 (IISFVILSVFSILSNEELIFL), 156–176 (ILLLTDLCIGFHSPHGWELMI), and 191–211 (IISGVVSTFPVILDTIFKYWI).

This sequence belongs to the CemA family.

Its subcellular location is the plastid. It is found in the chloroplast inner membrane. The catalysed reaction is K(+)(in) + H(+)(out) = K(+)(out) + H(+)(in). Functionally, contributes to K(+)/H(+) antiport activity by supporting proton efflux to control proton extrusion and homeostasis in chloroplasts in a light-dependent manner to modulate photosynthesis. Prevents excessive induction of non-photochemical quenching (NPQ) under continuous-light conditions. Indirectly promotes efficient inorganic carbon uptake into chloroplasts. This is Potassium/proton antiporter CemA from Morus indica (Mulberry).